Reading from the N-terminus, the 289-residue chain is D-alanine aminotransferase (289 aa).

Tyr31 provides a ligand contact to substrate. Arg50 contributes to the pyridoxal 5'-phosphate binding site. 2 residues coordinate substrate: Arg99 and His101. Residue Lys147 is modified to N6-(pyridoxal phosphate)lysine. A pyridoxal 5'-phosphate-binding site is contributed by Glu179.

It belongs to the class-IV pyridoxal-phosphate-dependent aminotransferase family. In terms of assembly, homodimer. Pyridoxal 5'-phosphate is required as a cofactor.

It catalyses the reaction D-alanine + 2-oxoglutarate = D-glutamate + pyruvate. In terms of biological role, acts on the D-isomers of alanine, leucine, aspartate, glutamate, aminobutyrate, norvaline and asparagine. The enzyme transfers an amino group from a substrate D-amino acid to the pyridoxal phosphate cofactor to form pyridoxamine and an alpha-keto acid in the first half-reaction. The second half-reaction is the reverse of the first, transferring the amino group from the pyridoxamine to a second alpha-keto acid to form the product D-amino acid via a ping-pong mechanism. This is an important process in the formation of D-alanine and D-glutamate, which are essential bacterial cell wall components. This chain is D-alanine aminotransferase (dat), found in Listeria monocytogenes serovar 1/2a (strain ATCC BAA-679 / EGD-e).